A 177-amino-acid chain; its full sequence is ATP synthase subunit delta 1 (177 aa).

Belongs to the ATPase delta chain family. In terms of assembly, F-type ATPases have 2 components, F(1) - the catalytic core - and F(0) - the membrane proton channel. F(1) has five subunits: alpha(3), beta(3), gamma(1), delta(1), epsilon(1). F(0) has three main subunits: a(1), b(2) and c(10-14). The alpha and beta chains form an alternating ring which encloses part of the gamma chain. F(1) is attached to F(0) by a central stalk formed by the gamma and epsilon chains, while a peripheral stalk is formed by the delta and b chains.

It is found in the cell inner membrane. In terms of biological role, f(1)F(0) ATP synthase produces ATP from ADP in the presence of a proton or sodium gradient. F-type ATPases consist of two structural domains, F(1) containing the extramembraneous catalytic core and F(0) containing the membrane proton channel, linked together by a central stalk and a peripheral stalk. During catalysis, ATP synthesis in the catalytic domain of F(1) is coupled via a rotary mechanism of the central stalk subunits to proton translocation. Functionally, this protein is part of the stalk that links CF(0) to CF(1). It either transmits conformational changes from CF(0) to CF(1) or is implicated in proton conduction. This chain is ATP synthase subunit delta 1, found in Vibrio atlanticus (strain LGP32) (Vibrio splendidus (strain Mel32)).